A 378-amino-acid chain; its full sequence is Erythronate-4-phosphate dehydrogenase (378 aa).

Ser-45 and Thr-66 together coordinate substrate. Residues Asp-146 and Thr-175 each coordinate NAD(+). Arg-208 is an active-site residue. NAD(+) is bound at residue Asp-232. The active site involves Glu-237. The active-site Proton donor is His-254. Gly-257 serves as a coordination point for NAD(+). Position 258 (Tyr-258) interacts with substrate.

Belongs to the D-isomer specific 2-hydroxyacid dehydrogenase family. PdxB subfamily. As to quaternary structure, homodimer.

The protein localises to the cytoplasm. The catalysed reaction is 4-phospho-D-erythronate + NAD(+) = (R)-3-hydroxy-2-oxo-4-phosphooxybutanoate + NADH + H(+). Its pathway is cofactor biosynthesis; pyridoxine 5'-phosphate biosynthesis; pyridoxine 5'-phosphate from D-erythrose 4-phosphate: step 2/5. In terms of biological role, catalyzes the oxidation of erythronate-4-phosphate to 3-hydroxy-2-oxo-4-phosphonooxybutanoate. This chain is Erythronate-4-phosphate dehydrogenase, found in Salmonella agona (strain SL483).